Reading from the N-terminus, the 384-residue chain is Anhydro-N-acetylmuramic acid kinase (384 aa).

12 to 19 (GTSLDGVD) lines the ATP pocket.

The protein belongs to the anhydro-N-acetylmuramic acid kinase family.

It catalyses the reaction 1,6-anhydro-N-acetyl-beta-muramate + ATP + H2O = N-acetyl-D-muramate 6-phosphate + ADP + H(+). The protein operates within amino-sugar metabolism; 1,6-anhydro-N-acetylmuramate degradation. It functions in the pathway cell wall biogenesis; peptidoglycan recycling. Its function is as follows. Catalyzes the specific phosphorylation of 1,6-anhydro-N-acetylmuramic acid (anhMurNAc) with the simultaneous cleavage of the 1,6-anhydro ring, generating MurNAc-6-P. Is required for the utilization of anhMurNAc either imported from the medium or derived from its own cell wall murein, and thus plays a role in cell wall recycling. The protein is Anhydro-N-acetylmuramic acid kinase of Cronobacter sakazakii (strain ATCC BAA-894) (Enterobacter sakazakii).